The following is a 116-amino-acid chain: Photosystem II reaction center Psb28 protein (116 aa).

Belongs to the Psb28 family. In terms of assembly, part of the photosystem II complex.

Its subcellular location is the plastid. It is found in the chloroplast thylakoid membrane. The protein is Photosystem II reaction center Psb28 protein of Guillardia theta (Cryptophyte).